The primary structure comprises 211 residues: 3,4-dihydroxy-2-butanone 4-phosphate synthase (211 aa).

D-ribulose 5-phosphate-binding positions include 37–38 (RE), Asp42, 150–154 (RGGHT), and Glu174. Glu38 contacts Mg(2+). His153 lines the Mg(2+) pocket.

It belongs to the DHBP synthase family. In terms of assembly, homodimer. The cofactor is Mg(2+). It depends on Mn(2+) as a cofactor.

It catalyses the reaction D-ribulose 5-phosphate = (2S)-2-hydroxy-3-oxobutyl phosphate + formate + H(+). It participates in cofactor biosynthesis; riboflavin biosynthesis; 2-hydroxy-3-oxobutyl phosphate from D-ribulose 5-phosphate: step 1/1. Its function is as follows. Catalyzes the conversion of D-ribulose 5-phosphate to formate and 3,4-dihydroxy-2-butanone 4-phosphate. This chain is 3,4-dihydroxy-2-butanone 4-phosphate synthase, found in Baumannia cicadellinicola subsp. Homalodisca coagulata.